The primary structure comprises 504 residues: Cytochrome P450 3A41 (504 aa).

A heme-binding site is contributed by Cys-443.

This sequence belongs to the cytochrome P450 family. Heme is required as a cofactor. As to expression, expressed in liver. Also expressed in the kidneys of female mice, with traces in the stomach, ovary, and heart of female mice and in the testis of male mice.

The protein localises to the endoplasmic reticulum membrane. The protein resides in the microsome membrane. The catalysed reaction is an organic molecule + reduced [NADPH--hemoprotein reductase] + O2 = an alcohol + oxidized [NADPH--hemoprotein reductase] + H2O + H(+). This chain is Cytochrome P450 3A41 (Cyp3a41a), found in Mus musculus (Mouse).